The primary structure comprises 59 residues: Large ribosomal subunit protein bL32 (59 aa).

Belongs to the bacterial ribosomal protein bL32 family.

The protein is Large ribosomal subunit protein bL32 of Synechococcus sp. (strain RCC307).